The sequence spans 718 residues: Protein Smaug homolog 1 (718 aa).

At S168 the chain carries Phosphoserine. 3 disordered regions span residues 278–323 (ARGP…EEGS), 416–474 (KAYS…LQPH), and 572–601 (NRGF…QYQI). Residues 323–391 (SGMKDVPAWL…ERQNLLKSLE (69 aa)) enclose the SAM domain. Residue S420 is modified to Phosphoserine. The residue at position 424 (T424) is a Phosphothreonine. The segment covering 453 to 466 (GAAATGATATPSAG) has biased composition (low complexity). Residue R573 is modified to Omega-N-methylarginine. The residue at position 580 (S580) is a Phosphoserine.

The protein belongs to the SMAUG family.

Its subcellular location is the cytoplasm. It localises to the cell projection. The protein localises to the dendrite. The protein resides in the synapse. It is found in the synaptosome. Acts as a translational repressor of SRE-containing messengers. This is Protein Smaug homolog 1 (SAMD4A) from Homo sapiens (Human).